We begin with the raw amino-acid sequence, 29 residues long: Cyclotide mela-4 (29 aa).

Residues 1–29 (GKPICGETCFKGKCYTPGCTCSYPICKKN) constitute a cross-link (cyclopeptide (Gly-Asn)). Disulfide bonds link Cys5/Cys19, Cys9/Cys21, and Cys14/Cys26.

Post-translationally, this is a cyclic peptide. In terms of processing, contains 3 disulfide bonds.

Functionally, probably participates in a plant defense mechanism (Potential). Binds to and induces leakage in phospholipd membranes, particularly ones containing 1-palmitoyl-2-oleophosphatidylethanolamine (POPE). In vitro, displays cytotoxicity against cultured cells. Not active against Gram-negative bacterium E.coli ATCC 25922 or Gram-positive bacterium S.aureus ATCC 25923 up to a concentration of 64 uM. This chain is Cyclotide mela-4, found in Melicytus latifolius (Norfolk Island mahoe).